A 367-amino-acid chain; its full sequence is S-adenosylmethionine decarboxylase proenzyme 3 (367 aa).

Catalysis depends on residues Glu9 and Glu12. Ser69 functions as the Schiff-base intermediate with substrate; via pyruvic acid in the catalytic mechanism. The residue at position 69 (Ser69) is a Pyruvic acid (Ser); by autocatalysis. The active-site Proton donor; for catalytic activity is Cys83. Residues Ser234 and His247 each act as proton acceptor; for processing activity in the active site.

This sequence belongs to the eukaryotic AdoMetDC family. Pyruvate is required as a cofactor. In terms of processing, is synthesized initially as an inactive proenzyme. Formation of the active enzyme involves a self-maturation process in which the active site pyruvoyl group is generated from an internal serine residue via an autocatalytic post-translational modification. Two non-identical subunits are generated from the proenzyme in this reaction, and the pyruvate is formed at the N-terminus of the alpha chain, which is derived from the carboxyl end of the proenzyme. The post-translation cleavage follows an unusual pathway, termed non-hydrolytic serinolysis, in which the side chain hydroxyl group of the serine supplies its oxygen atom to form the C-terminus of the beta chain, while the remainder of the serine residue undergoes an oxidative deamination to produce ammonia and the pyruvoyl group blocking the N-terminus of the alpha chain.

It catalyses the reaction S-adenosyl-L-methionine + H(+) = S-adenosyl 3-(methylsulfanyl)propylamine + CO2. The protein operates within amine and polyamine biosynthesis; S-adenosylmethioninamine biosynthesis; S-adenosylmethioninamine from S-adenosyl-L-methionine: step 1/1. In Brassica juncea (Indian mustard), this protein is S-adenosylmethionine decarboxylase proenzyme 3 (SAMDC3).